The primary structure comprises 216 residues: Octanoyltransferase (216 aa).

Residues serine 32 to glutamine 207 form the BPL/LPL catalytic domain. Residues arginine 71 to histidine 78, serine 138 to glycine 140, and glycine 151 to alanine 153 contribute to the substrate site. Cysteine 169 acts as the Acyl-thioester intermediate in catalysis.

This sequence belongs to the LipB family.

The protein resides in the cytoplasm. The enzyme catalyses octanoyl-[ACP] + L-lysyl-[protein] = N(6)-octanoyl-L-lysyl-[protein] + holo-[ACP] + H(+). Its pathway is protein modification; protein lipoylation via endogenous pathway; protein N(6)-(lipoyl)lysine from octanoyl-[acyl-carrier-protein]: step 1/2. Functionally, catalyzes the transfer of endogenously produced octanoic acid from octanoyl-acyl-carrier-protein onto the lipoyl domains of lipoate-dependent enzymes. Lipoyl-ACP can also act as a substrate although octanoyl-ACP is likely to be the physiological substrate. The polypeptide is Octanoyltransferase (Shewanella frigidimarina (strain NCIMB 400)).